The following is a 327-amino-acid chain: Phenylalanine--tRNA ligase alpha subunit (327 aa).

Residue Glu-252 participates in Mg(2+) binding.

Belongs to the class-II aminoacyl-tRNA synthetase family. Phe-tRNA synthetase alpha subunit type 1 subfamily. Tetramer of two alpha and two beta subunits. The cofactor is Mg(2+).

It localises to the cytoplasm. It carries out the reaction tRNA(Phe) + L-phenylalanine + ATP = L-phenylalanyl-tRNA(Phe) + AMP + diphosphate + H(+). The chain is Phenylalanine--tRNA ligase alpha subunit from Aeromonas hydrophila subsp. hydrophila (strain ATCC 7966 / DSM 30187 / BCRC 13018 / CCUG 14551 / JCM 1027 / KCTC 2358 / NCIMB 9240 / NCTC 8049).